Consider the following 630-residue polypeptide: Cytochrome B pre-mRNA-processing protein 2 (630 aa).

Its subcellular location is the mitochondrion. Its function is as follows. Appears to be specifically required for the splicing of the terminal intron (bI5) of the cytochrome b pre-mRNA. Can also stimulates the splicing of the omega intron of the precursor of large ribosomal RNA. This is Cytochrome B pre-mRNA-processing protein 2 (CBP2) from Saccharomyces paradoxus (Yeast).